The primary structure comprises 377 residues: [2-(trimethylamino)ethyl]phosphonate dioxygenase (377 aa).

The tract at residues 95–119 (DTDQSSEVGRTSPDVETWDSSQPAP) is disordered. Asn187 lines the [2-(trimethylamino)ethyl]phosphonate pocket. His198 contributes to the 2-oxoglutarate binding site. Fe(2+)-binding residues include His198 and Asp200. Residues Asp200, Asn201, Tyr203, Asn286, and Arg288 each coordinate [2-(trimethylamino)ethyl]phosphonate. Residues His341, Arg343, and Arg352 each coordinate 2-oxoglutarate. His341 lines the Fe(2+) pocket.

Belongs to the gamma-BBH/TMLD family. In terms of assembly, homodimer. Requires Fe(2+) as cofactor. L-ascorbate serves as cofactor.

The enzyme catalyses [2-(trimethylamino)ethyl]phosphonate + 2-oxoglutarate + O2 = [(1R)-1-hydroxy-2-(trimethylamino)ethyl]phosphonate + succinate + CO2. Its function is as follows. Involved in the degradation of the naturally occurring organophosphonate 2-(trimethylammonio)ethylphosphonate (TMAEP). Catalyzes the hydroxylation of TMAEP to (R)-1-hydroxy-2-(trimethylammonio)ethylphosphonate (OH-TMAEP). Is highly specific for its N-trimethylated substrate. Cannot use gamma-butyrobetaine as substrate. This is [2-(trimethylamino)ethyl]phosphonate dioxygenase from Leisingera caerulea (Phaeobacter caeruleus).